Here is a 257-residue protein sequence, read N- to C-terminus: MNPLIIKLGGVLLDSEEALERLFTALVNYRESHQRPLVIVHGGGCVVDELMKGLNLPVKKKDGLRVTPADQIGIITGALAGTANKTLLAWAKKHHIASVGLFLGDGDSVNVTQLDEALGHVGLAQPGSPKLINMLLENGFLPVVSSIGVTDDGQLMNVNADQAATALAATLGADLILLSDVSGILDGKGQRIAEMTASKAEQLIDQGIITDGMIVKVNAALDAARALGRPVDIASWRHAEQLPALFNGTPIGTRILA.

Residues 43-44 (GG), arginine 65, and asparagine 157 contribute to the substrate site. Residues 180–185 (DVSGIL) and 208–210 (IIT) each bind ATP.

This sequence belongs to the acetylglutamate kinase family. ArgB subfamily. Homodimer.

It is found in the cytoplasm. The enzyme catalyses N-acetyl-L-glutamate + ATP = N-acetyl-L-glutamyl 5-phosphate + ADP. The protein operates within amino-acid biosynthesis; L-arginine biosynthesis; N(2)-acetyl-L-ornithine from L-glutamate: step 2/4. Its function is as follows. Catalyzes the ATP-dependent phosphorylation of N-acetyl-L-glutamate. In Salmonella paratyphi A (strain AKU_12601), this protein is Acetylglutamate kinase.